The sequence spans 470 residues: uncharacterized protein (470 aa).

The first 24 residues, 1-24, serve as a signal peptide directing secretion; sequence MKKLVGSLAAISVLSATGFSYVGY.

This is an uncharacterized protein from Mycoplasma capricolum subsp. capricolum (strain California kid / ATCC 27343 / NCTC 10154).